We begin with the raw amino-acid sequence, 444 residues long: Serine--tRNA ligase (444 aa).

249-251 lines the L-serine pocket; the sequence is TAE. ATP-binding positions include 280–282 and valine 296; that span reads RRE. Residue glutamate 303 coordinates L-serine. 367–370 serves as a coordination point for ATP; sequence EIVS. Threonine 401 serves as a coordination point for L-serine.

This sequence belongs to the class-II aminoacyl-tRNA synthetase family. Type-1 seryl-tRNA synthetase subfamily. In terms of assembly, homodimer. The tRNA molecule binds across the dimer.

It is found in the cytoplasm. It carries out the reaction tRNA(Ser) + L-serine + ATP = L-seryl-tRNA(Ser) + AMP + diphosphate + H(+). The enzyme catalyses tRNA(Sec) + L-serine + ATP = L-seryl-tRNA(Sec) + AMP + diphosphate + H(+). The protein operates within aminoacyl-tRNA biosynthesis; selenocysteinyl-tRNA(Sec) biosynthesis; L-seryl-tRNA(Sec) from L-serine and tRNA(Sec): step 1/1. Its function is as follows. Catalyzes the attachment of serine to tRNA(Ser). Is also able to aminoacylate tRNA(Sec) with serine, to form the misacylated tRNA L-seryl-tRNA(Sec), which will be further converted into selenocysteinyl-tRNA(Sec). In Picrophilus torridus (strain ATCC 700027 / DSM 9790 / JCM 10055 / NBRC 100828 / KAW 2/3), this protein is Serine--tRNA ligase.